We begin with the raw amino-acid sequence, 150 residues long: Protein E6 (150 aa).

2 zinc fingers span residues 30-66 (CVYCKETLQWADVYNFAICDLRVVYRDRSPYAACKRC) and 103-139 (CHRCQMPLGPEEKQRIVDEKRRFHEIAGQWKGLCTNC). The PDZ-binding domain signature appears at 148 to 150 (TQV).

This sequence belongs to the papillomaviridae E6 protein family. Forms homodimers. Interacts with ubiquitin-protein ligase UBE3A/E6-AP and thus forms a complex with human TP53. Interacts with human NFX1 and MAGI3. Interacts with human IRF3; this interaction inhibits the establishment of antiviral state. Interacts with human TYK2; this interaction inhibits JAK-STAT activation by interferon alpha. Interacts with host DLG1; this interaction leads to the proteasomal degradation of DLG1.

The protein localises to the host cytoplasm. It is found in the host nucleus. Plays a major role in the induction and maintenance of cellular transformation. Acts mainly as an oncoprotein by stimulating the destruction of many host cell key regulatory proteins. E6 associates with host UBE3A/E6-AP ubiquitin-protein ligase, and inactivates tumor suppressors TP53 and TP73 by targeting them to the 26S proteasome for degradation. In turn, DNA damage and chromosomal instabilities increase and lead to cell proliferation and cancer development. The complex E6/E6AP targets several other substrates to degradation via the proteasome including host DLG1 or NFX1, a repressor of human telomerase reverse transcriptase (hTERT). The resulting increased expression of hTERT prevents the shortening of telomere length leading to cell immortalization. Other cellular targets including BAK1, Fas-associated death domain-containing protein (FADD) and procaspase 8, are degraded by E6/E6AP causing inhibition of apoptosis. E6 also inhibits immune response by interacting with host IRF3 and TYK2. These interactions prevent IRF3 transcriptional activities and inhibit TYK2-mediated JAK-STAT activation by interferon alpha resulting in inhibition of the interferon signaling pathway. The sequence is that of Protein E6 from Human papillomavirus type 26.